The sequence spans 463 residues: Quinolone resistance protein NorB (463 aa).

Transmembrane regions (helical) follow at residues 17–37 (IGIV…VNVV), 53–73 (IAVS…GGLA), 86–106 (IILN…LLLI), 107–127 (IGRL…LSII), 142–162 (YWSI…GAVA), 165–185 (LGWR…LFLI), 201–221 (FDIK…ILIT), 230–250 (SLLF…FIVL), 273–293 (TASN…NTFV), 299–319 (YSSL…LIMI), 334–354 (PMLI…LTFL), 357–377 (ILYV…LGIY), 403–423 (MASA…YAIV), and 435–455 (IALW…LLLV).

The protein belongs to the major facilitator superfamily. TCR/Tet family.

It is found in the cell membrane. Functionally, multidrug efflux pump that acts independently of NorA and is one of the factors that confers resistance against diverse quinolones and chemical compounds. Can facilitate bacterial survival in vivo when overexpressed in an abscess and may contribute to the relative resistance of staphylococcal abscesses to antimicrobial therapy. The polypeptide is Quinolone resistance protein NorB (norB) (Staphylococcus aureus (strain MW2)).